The primary structure comprises 348 residues: Selenide, water dikinase (348 aa).

Cys17 is a catalytic residue. Residues Lys20 and 48 to 50 (TSD) each bind ATP. Position 51 (Asp51) interacts with Mg(2+). ATP is bound by residues Asp68, Asp91, and 139–141 (GHT). Asp91 provides a ligand contact to Mg(2+). Residue Asp227 coordinates Mg(2+).

It belongs to the selenophosphate synthase 1 family. Class I subfamily. In terms of assembly, homodimer. The cofactor is Mg(2+).

The enzyme catalyses hydrogenselenide + ATP + H2O = selenophosphate + AMP + phosphate + 2 H(+). In terms of biological role, synthesizes selenophosphate from selenide and ATP. In Dechloromonas aromatica (strain RCB), this protein is Selenide, water dikinase.